Reading from the N-terminus, the 550-residue chain is Cyclopentanone 1,2-monooxygenase (550 aa).

FAD contacts are provided by residues 31–32 (FT), Asp-51, Trp-60, Asp-71, Tyr-77, and Val-123.

It belongs to the FAD-binding monooxygenase family. In terms of assembly, homotetramer. FAD serves as cofactor.

The enzyme catalyses cyclopentanone + NADPH + O2 + H(+) = 5-valerolactone + NADP(+) + H2O. It functions in the pathway alcohol metabolism; cyclopentanol degradation; 5-valerolactone from cyclopentanol: step 2/2. In terms of biological role, catalyzes a Baeyer-Villiger oxidation reaction, i.e. the insertion of an oxygen atom into a carbon-carbon bond adjacent to a carbonyl, which converts ketones to esters or lactones using NADPH as an electron donor. Converts cyclopentanone to 5-valerolactone, a step in the degradation pathway of cyclopentanol. Besides cycloalkanones, can also act on methylated and other alkylated cycloalkanones, and on methylated cycloalkenones, with high enantioselectivity in some cases. Cannot use NADH instead of NADPH. The chain is Cyclopentanone 1,2-monooxygenase (cpnB) from Comamonas sp. (strain NCIMB 9872).